Here is a 401-residue protein sequence, read N- to C-terminus: Phosrestin-1 (401 aa).

Belongs to the arrestin family.

Functionally, directly interacts with light-activated rhodopsin thereby activating the phosphorylation of metarhodopsin. Inhibits the dephosphorylation of metarhodopsin. This is Phosrestin-1 (ARR2) from Calliphora vicina (Blue blowfly).